Here is a 7126-residue protein sequence, read N- to C-terminus: Replicase polyprotein 1ab (7126 aa).

Positions 25–151 (RSDHVACTVP…EHTFLLRKNG (127 aa)) constitute a CoV Nsp1 globular domain. The region spanning 167–195 (TPYVEILDDLEADPTGKYSQNLLKKLIGG) is the BetaCoV Nsp1 C-terminal domain. The region spanning 197 to 472 (CIPVDQYMCG…WDKVVETANL (276 aa)) is the CoV Nsp2 N-terminal domain. Zn(2+) is bound by residues cysteine 339, cysteine 342, cysteine 358, and cysteine 360. Positions 339–360 (CNACGRGTWCTGNAIQGFACDC) are C4. A CoV Nsp2 middle domain is found at 478-712 (QHSLNFCQQF…LDIMSKAMKL (235 aa)). A CoV Nsp2 C-terminal domain is found at 714-847 (HTNVSWAGTK…VSTLFRLKGG (134 aa)). Residues 851 to 960 (KKVTFGDVNT…MTFSINPVED (110 aa)) enclose the Ubiquitin-like 1 domain. A disordered region spans residues 1039–1061 (AQEPSVESTDSTPSTSTVVSEND). The span at 1041-1059 (EPSVESTDSTPSTSTVVSE) shows a compositional bias: low complexity. Macro domains lie at 1159–1328 (DLSK…KPDG) and 1329–1453 (LVYS…AIQT). In terms of domain architecture, DPUP spans 1453–1526 (TPETAFINNV…LEACRAYLTS (74 aa)). The 56-residue stretch at 1531-1586 (QVNIEVLVTIDGVNFRTVILNDATTFRKQLGATFYKGVDISDALPTVKMGGESLFV) folds into the Ubiquitin-like 2 domain. In terms of domain architecture, Peptidase C16 spans 1600–1871 (EYYGTSDVTF…KVEVNPDLSN (272 aa)). Cysteine 1641 functions as the For PL-PRO activity in the catalytic mechanism. Residues cysteine 1721, cysteine 1724, cysteine 1756, and cysteine 1758 each coordinate Zn(2+). The C4-type zinc finger occupies 1721-1758 (CTVCGIRDIEYTGMRACVYAGVNSMEELQSVFNETCVC). Residues histidine 1807 and aspartate 1822 each act as for PL-PRO activity in the active site. Residues 1885-2002 (TIKYSPATIL…QLYDVAPIVL (118 aa)) form the Nucleic acid-binding domain. One can recognise a G2M domain in the interval 2019 to 2140 (PNVPVVEDVS…AKITVTATTA (122 aa)). A run of 3 helical transmembrane segments spans residues 2119–2139 (VLLGASSLFASFAKITVTATT), 2152–2172 (FVVNYGVLQNMFLFLKMLFFL), and 2229–2249 (LFLLLCTTILLLSSIYHLVIF). Residues 2119–2402 (VLLGASSLFA…VTHIPLHGLV (284 aa)) form an HD1 region. Residues 2266–2332 (LAMYKEVRSY…LQMLQTHITS (67 aa)) form the 3Ecto domain. Intrachain disulfides connect cysteine 2282/cysteine 2310 and cysteine 2300/cysteine 2307. The next 3 membrane-spanning stretches (helical) occupy residues 2333-2353 (YVLNIDWIWFALEFFLAYVLY), 2357-2377 (FNVLLLVVTAQYFFAYTSAFV), and 2382-2402 (YNYIVSGLFFLVTHIPLHGLV). Residues 2416–2506 (KFYSHVINGC…TLRRLIKPTD (91 aa)) are Y1. The 374-residue stretch at 2416-2789 (KFYSHVINGC…LSVKFSATKI (374 aa)) folds into the CoV Nsp3 Y domain. Zn(2+) is bound by residues histidine 2420, cysteine 2425, cysteine 2430, cysteine 2433, cysteine 2466, histidine 2469, cysteine 2473, and cysteine 2476. A ZF1 region spans residues 2420-2433 (HVINGCKDTACLLC). The segment at 2466 to 2476 (CCKHNWNCVEC) is ZF2. The interval 2507-2605 (QSHYYVDSVV…LVDVNLVTTV (99 aa)) is Y2. Residues 2507–2789 (QSHYYVDSVV…LSVKFSATKI (283 aa)) are coV-Y. The segment at 2606–2688 (GDSREIAIKM…DALQYAHKND (83 aa)) is Y3. Residues 2689-2789 (IQLTTECYNN…LSVKFSATKI (101 aa)) are Y4. 4 helical membrane-spanning segments follow: residues 2807–2827 (GYCILTLFVFTVAVLSWFCLP), 3079–3099 (STSLAMGLVLCVFLTAAFYYI), 3112–3132 (CAVVAVVAALLNSLCLCFIVA), and 3156–3176 (AFIMHISWYVMFGTVVPIWML). Positions 2807 to 3176 (GYCILTLFVF…FGTVVPIWML (370 aa)) are HD2. The Nsp4C domain maps to 3202 to 3298 (VFTDGKLNCS…NCSVTSSVLQ (97 aa)). Positions 3299–3604 (SGLVKMSAPS…NMQVMGVVMQ (306 aa)) constitute a Peptidase C30 domain. Active-site for 3CL-PRO activity residues include histidine 3339 and cysteine 3446. 7 consecutive transmembrane segments (helical) span residues 3610 to 3630 (ISYGFMHWLMSTLVLAYVSVM), 3644 to 3664 (TIPTQMTPLLFGFMACVMFTV), 3669 to 3689 (TFLSLFLLPVALCLTYANIVY), 3714 to 3734 (RTTHLDFGLYISLSFVLAIIV), 3742 to 3762 (MSNLALALCSGVMWFYTYVIG), 3791 to 3811 (LAKFISGLVFLYAPHLGFILP), and 3815 to 3835 (LVLLIYLCLGYMCTMYFGVFS). Residues 3610–3835 (ISYGFMHWLM…MCTMYFGVFS (226 aa)) are HD3. The 83-residue stretch at 3897–3979 (SKLTDLKCTS…DLFENSSVLQ (83 aa)) folds into the RdRp Nsp7 cofactor domain. One can recognise a RdRp Nsp8 cofactor domain in the interval 3980 to 4178 (ATLTEFSHLA…RASSSAVKLQ (199 aa)). The 110-residue stretch at 4179–4288 (NNEIHPKGLK…GHIAATVRLQ (110 aa)) folds into the Nsp9 ssRNA-binding domain. One can recognise an ExoN/MTase coactivator domain in the interval 4289 to 4427 (AGANTEFASN…DALRNNTVPQ (139 aa)). The Zn(2+) site is built by cysteine 4362, cysteine 4365, histidine 4371, cysteine 4378, cysteine 4404, cysteine 4407, cysteine 4415, and cysteine 4417. 2 zinc fingers span residues 4362-4378 (CLYCRAHIEHPDVSGVC) and 4404-4417 (CNVCQYWVGYGCNC). The NiRAN domain occupies 4433 to 4690 (FLNRVRGSSV…AAETHKDCDF (258 aa)). Mn(2+) contacts are provided by asparagine 4638 and aspartate 4647. The region spanning 4695-4793 (IEWLLLEYDY…MNMDVNIHRH (99 aa)) is the Nsp12 Interface domain. 5 residues coordinate Zn(2+): histidine 4724, cysteine 4730, cysteine 4735, cysteine 4739, and cysteine 4916. A Nsp12 RNA-dependent RNA polymerase domain is found at 4794-5361 (RLALKELMMY…DLYSSPTTLQ (568 aa)). The interval 4796–5010 (ALKELMMYAA…HQKMLKSMAA (215 aa)) is rdRp Fingers N-ter. The interval 5011–5049 (TRGATCVIGTTKFYGGWDFMLKTLYKDVESPHLMGWDYP) is rdRp Palm N-ter. One can recognise a RdRp catalytic domain in the interval 5041-5203 (PHLMGWDYPK…CYNSDYAAKG (163 aa)). The segment at 5050 to 5108 (KCDRAMPNMCRILASLILARKHSTCCTNSDRFYRLANECAQVLSEYVLCGGGYYVKPGG) is rdRp Fingers C-ter. Histidine 5071, cysteine 5074, and cysteine 5075 together coordinate Zn(2+). The interval 5109–5244 (TSSGDATTAY…EKGPHEFCSQ (136 aa)) is rdRp Palm C-ter. Catalysis depends on residues serine 5188, aspartate 5189, and aspartate 5190. The interval 5245 to 5361 (HTLYIKDGDD…DLYSSPTTLQ (117 aa)) is rdRp Thumb. The CV ZBD domain maps to 5362–5474 (AVGSCVVCHS…MEFNRLATCD (113 aa)). The Zn(2+) site is built by cysteine 5366, cysteine 5369, cysteine 5377, cysteine 5380, cysteine 5387, cysteine 5390, histidine 5394, histidine 5400, cysteine 5411, cysteine 5416, cysteine 5433, and histidine 5436. The (+)RNA virus helicase ATP-binding domain occupies 5618 to 5799 (TVPEEFANHV…MCNLGPDIFL (182 aa)). ATP is bound at residue 5643-5650 (GPPGTGKS). Residues 5800–5974 (SVCYRCPKEI…GLFKDCSRED (175 aa)) form the (+)RNA virus helicase C-terminal domain. The 216-residue stretch at 6031–6246 (LFITRDEAIR…RCLAIYDCFI (216 aa)) folds into the ExoN domain. Catalysis depends on residues aspartate 6049, glutamate 6051, and glutamate 6150. Positions 6166, 6169, 6185, 6188, 6216, 6220, and 6223 each coordinate Zn(2+). Residues histidine 6227 and aspartate 6232 contribute to the active site. Cysteine 6238 lines the Zn(2+) pocket. An N7-MTase domain is found at 6255–6482 (YPYISHEQKL…NLWSTFVKVQ (228 aa)). 6290 to 6296 (DIGNPKG) contributes to the S-adenosyl-L-methionine binding site. The segment at 6368 to 6382 (CNGGSLYVNKHAFHT) is gpppA-binding. Residues cysteine 6406, cysteine 6428, cysteine 6439, and histidine 6442 each coordinate Zn(2+). The region spanning 6483–6543 (GLENIAFNVI…NVAFELYAKR (61 aa)) is the Nsp15 N-terminal oligomerization domain. One can recognise an AV-Nsp11N/CoV-Nsp15M domain in the interval 6544-6665 (AVRSHPDLNL…LYKKVNNEFV (122 aa)). Positions 6682–6821 (TALTPMEEDF…KDGKVQTFYP (140 aa)) constitute a NendoU domain. Catalysis depends on residues histidine 6712, histidine 6727, lysine 6767, lysine 6870, aspartate 6954, lysine 6994, and glutamate 7027. The Nidovirus-type SAM-dependent 2'-O-MTase domain occupies 6826 to 7120 (TNDWKPGLTM…TLNVSTDVLV (295 aa)).

The protein belongs to the coronaviruses polyprotein 1ab family. As to quaternary structure, interacts with host PHB and PHB2. Interacts with papain-like protease nsp3 and non-structural protein 6. In terms of assembly, monomer. Homodimer. Only the homodimer shows catalytic activity. As to quaternary structure, interacts with nsp8 and nsp12 to form the replication-transcription complex (RTC): nsp12, nsp7, two subunits of nsp8, and up to two subunits of nsp13. Interacts with nsp7, nsp13 and nsp12 to form the replication-transcription complex (RTC): nsp12, nsp7, two subunits of nsp8, and up to two subunits of nsp13. In terms of assembly, interacts with nsp12. As to quaternary structure, interacts with proofreading exoribonuclease nsp14 and 2'-O-methyltransferase nsp16; these interactions enhance nsp14 and nsp16 enzymatic activities. Interacts with nsp7 and nsp8 to form the replication-transcription complex (RTC): nsp12, nsp7, two subunits of nsp8, and up to two subunits of nsp13. Interacts with nsp9. In terms of assembly, interacts with nsp8 to form the replication-transcription complex (RTC): nsp12, nsp7, two subunits of nsp8, and up to two subunits of nsp13. Requires Mn(2+) as cofactor. It depends on Mg(2+) as a cofactor. Post-translationally, specific enzymatic cleavages in vivo by its own proteases yield mature proteins. 3CL-PRO and PL-PRO proteinases are autocatalytically processed.

The protein localises to the host membrane. Its subcellular location is the host cytoplasm. It localises to the host perinuclear region. It is found in the host endoplasmic reticulum-Golgi intermediate compartment. The catalysed reaction is ATP + H2O = ADP + phosphate + H(+). The enzyme catalyses RNA(n) + a ribonucleoside 5'-triphosphate = RNA(n+1) + diphosphate. It catalyses the reaction Thiol-dependent hydrolysis of ester, thioester, amide, peptide and isopeptide bonds formed by the C-terminal Gly of ubiquitin (a 76-residue protein attached to proteins as an intracellular targeting signal).. It carries out the reaction a 5'-end (N(7)-methyl 5'-triphosphoguanosine)-ribonucleoside in mRNA + S-adenosyl-L-methionine = a 5'-end (N(7)-methyl 5'-triphosphoguanosine)-(2'-O-methyl-ribonucleoside) in mRNA + S-adenosyl-L-homocysteine + H(+). The catalysed reaction is uridylyl-uridylyl-ribonucleotide-RNA = a 3'-end uridylyl-2',3'-cyclophospho-uridine-RNA + a 5'-end dephospho-ribonucleoside-RNA. The enzyme catalyses a 5'-end diphospho-ribonucleoside in mRNA + GTP + H(+) = a 5'-end (5'-triphosphoguanosine)-ribonucleoside in mRNA + diphosphate. It catalyses the reaction a 5'-end (5'-triphosphoguanosine)-ribonucleoside in mRNA + S-adenosyl-L-methionine = a 5'-end (N(7)-methyl 5'-triphosphoguanosine)-ribonucleoside in mRNA + S-adenosyl-L-homocysteine. In terms of biological role, the replicase polyprotein of coronaviruses is a multifunctional protein: it contains the activities necessary for the transcription of negative stranded RNA, leader RNA, subgenomic mRNAs and progeny virion RNA as well as proteinases responsible for the cleavage of the polyprotein into functional products. Inhibits host translation by interacting with the 40S ribosomal subunit. The nsp1-40S ribosome complex further induces an endonucleolytic cleavage near the 5'UTR of host mRNAs, targeting them for degradation. Viral mRNAs are not susceptible to nsp1-mediated endonucleolytic RNA cleavage thanks to the presence of a 5'-end leader sequence and are therefore protected from degradation. By suppressing host gene expression, nsp1 facilitates efficient viral gene expression in infected cells and evasion from host immune response. Its function is as follows. May play a role in the modulation of host cell survival signaling pathway by interacting with host PHB and PHB2. Indeed, these two proteins play a role in maintaining the functional integrity of the mitochondria and protecting cells from various stresses. Functionally, responsible for the cleavages located at the N-terminus of the replicase polyprotein. In addition, PL-PRO possesses a deubiquitinating/deISGylating activity and processes both 'Lys-48'- and 'Lys-63'-linked polyubiquitin chains from cellular substrates. Participates together with nsp4 in the assembly of virally-induced cytoplasmic double-membrane vesicles necessary for viral replication. Antagonizes innate immune induction of type I interferon by blocking the phosphorylation, dimerization and subsequent nuclear translocation of host IRF3. Also prevents host NF-kappa-B signaling. In terms of biological role, participates in the assembly of virally-induced cytoplasmic double-membrane vesicles necessary for viral replication. Cleaves the C-terminus of replicase polyprotein at 11 sites. Recognizes substrates containing the core sequence [ILMVF]-Q-|-[SGACN]. Also able to bind an ADP-ribose-1''-phosphate (ADRP). Its function is as follows. Plays a role in the initial induction of autophagosomes from host endoplasmic reticulum. Later, limits the expansion of these phagosomes that are no longer able to deliver viral components to lysosomes. Functionally, forms a hexadecamer with nsp8 (8 subunits of each) that may participate in viral replication by acting as a primase. Alternatively, may synthesize substantially longer products than oligonucleotide primers. In terms of biological role, forms a hexadecamer with nsp7 (8 subunits of each) that may participate in viral replication by acting as a primase. Alternatively, may synthesize substantially longer products than oligonucleotide primers. Forms a primer, NSP9-pU, which is utilized by the polymerase for the initiation of RNA chains. Interacts with ribosome signal recognition particle RNA (SRP). Together with NSP8, suppress protein integration into the cell membrane, thereby disrupting host immune defenses. Its function is as follows. Plays a pivotal role in viral transcription by stimulating both nsp14 3'-5' exoribonuclease and nsp16 2'-O-methyltransferase activities. Therefore plays an essential role in viral mRNAs cap methylation. Functionally, RNA-directed RNA polymerase that catalyzes the transcription of viral genomic and subgenomic RNAs. Acts in complex with nsp7 and nsp8 to transcribe both the minus and positive strands of genomic RNA. The kinase-like NiRAN domain of NSP12 attaches one or more nucleotides to the amino terminus of NSP9, forming a covalent RNA-protein intermediate that serves as transcription/replication primer. Subgenomic RNAs (sgRNAs) are formed by discontinuous transcription: The polymerase has the ability to pause at transcription-regulating sequences (TRS) and jump to the leader TRS, resulting in a major deletion. This creates a series of subgenomic RNAs that are replicated, transcribed and translated. In addition, Nsp12 is a subunit of the viral RNA capping enzyme that catalyzes the RNA guanylyltransferase reaction for genomic and sub-genomic RNAs. Subsequently, the NiRAN domain transfers RNA to GDP, and forms the core cap structure GpppA-RNA. In terms of biological role, multi-functional protein with a zinc-binding domain in N-terminus displaying RNA and DNA duplex-unwinding activities with 5' to 3' polarity. Activity of helicase is dependent on magnesium. Plays a role in viral RNA synthesis through two distinct activities. The N7-guanine methyltransferase activity plays a role in the formation of the cap structure GpppA-RNA. The proofreading exoribonuclease reduces the sensitivity of the virus to RNA mutagens during replication. This activity acts on both ssRNA and dsRNA in a 3'-5' direction. Its function is as follows. Plays a role in viral transcription/replication and prevents the simultaneous activation of host cell dsRNA sensors, such as MDA5/IFIH1, OAS, and PKR. Acts by degrading the 5'-polyuridines generated during replication of the poly(A) region of viral genomic and subgenomic RNAs. Catalyzes a two-step reaction in which a 2'3'-cyclic phosphate (2'3'-cP) is first generated by 2'-O transesterification, which is then hydrolyzed to a 3'-phosphate (3'-P). If not degraded, poly(U) RNA would hybridize with poly(A) RNA tails and activate host dsRNA sensors. Functionally, methyltransferase that mediates mRNA cap 2'-O-ribose methylation to the 5'-cap structure of viral mRNAs. N7-methyl guanosine cap is a prerequisite for binding of nsp16. Therefore plays an essential role in viral mRNAs cap methylation which is essential to evade immune system. This chain is Replicase polyprotein 1ab (rep), found in Bat coronavirus 133/2005 (BtCoV).